The chain runs to 100 residues: UPF0213 protein YhbQ (100 aa).

The GIY-YIG domain occupies 2 to 77; sequence TPWFLYLIRT…KQLTKRQKER (76 aa).

The protein belongs to the UPF0213 family.

The protein is UPF0213 protein YhbQ of Escherichia coli O17:K52:H18 (strain UMN026 / ExPEC).